Consider the following 366-residue polypeptide: Capsular polysaccharide phosphotransferase LcbA (366 aa).

Belongs to the stealth family.

This chain is Capsular polysaccharide phosphotransferase LcbA (lcbA), found in Neisseria meningitidis.